An 81-amino-acid chain; its full sequence is Photosystem I iron-sulfur center (81 aa).

2 consecutive 4Fe-4S ferredoxin-type domains span residues 2–31 (AHSVKIYDTCIGCTQCVRACPTDVLEMVPW) and 39–68 (IASAPRTEDCVGCKRCESACPTDYLSVRVY). Residues Cys11, Cys14, Cys17, Cys21, Cys48, Cys51, Cys54, and Cys58 each coordinate [4Fe-4S] cluster.

In terms of assembly, the eukaryotic PSI reaction center is composed of at least 11 subunits. It depends on [4Fe-4S] cluster as a cofactor.

It is found in the plastid. The protein localises to the chloroplast thylakoid membrane. The enzyme catalyses reduced [plastocyanin] + hnu + oxidized [2Fe-2S]-[ferredoxin] = oxidized [plastocyanin] + reduced [2Fe-2S]-[ferredoxin]. Apoprotein for the two 4Fe-4S centers FA and FB of photosystem I (PSI); essential for photochemical activity. FB is the terminal electron acceptor of PSI, donating electrons to ferredoxin. The C-terminus interacts with PsaA/B/D and helps assemble the protein into the PSI complex. Required for binding of PsaD and PsaE to PSI. PSI is a plastocyanin-ferredoxin oxidoreductase, converting photonic excitation into a charge separation, which transfers an electron from the donor P700 chlorophyll pair to the spectroscopically characterized acceptors A0, A1, FX, FA and FB in turn. The sequence is that of Photosystem I iron-sulfur center from Gnetum parvifolium (Small-leaved jointfir).